Reading from the N-terminus, the 402-residue chain is Transcription regulatory protein OpdE (402 aa).

Transmembrane regions (helical) follow at residues 22-42, 60-80, 86-106, 108-128, 147-167, 170-190, 220-240, 256-276, 296-316, 318-338, 348-368, and 375-395; these read VLAI…PVSL, GIAI…SVAG, TLLL…ALAP, YFVY…FWSM, ALVN…GAWL, LIGW…ALAW, PGVM…FSLF, AHVS…TLLI, ALIA…VVLL, LWGL…ARVF, LFVA…GLLF, and ATFF…ILTA.

The protein to B.subtilis YwfA.

The protein resides in the cell membrane. Its function is as follows. Regulates the expression of oprD which encodes the imipenem-specific porin. In Pseudomonas aeruginosa (strain ATCC 15692 / DSM 22644 / CIP 104116 / JCM 14847 / LMG 12228 / 1C / PRS 101 / PAO1), this protein is Transcription regulatory protein OpdE (opdE).